The following is a 54-amino-acid chain: Potassium channel toxin alpha-KTx 14.1 (54 aa).

The N-terminal stretch at 1–23 is a signal peptide; sequence MKIFFAILLILAVCSMAIWTVNG.

Belongs to the short scorpion toxin superfamily. Potassium channel inhibitor family. Alpha-KTx 14 subfamily. Post-translationally, probably has three disulfide bridges. In terms of tissue distribution, expressed by the venom gland.

The protein resides in the secreted. Potential blocker of potassium channels. This chain is Potassium channel toxin alpha-KTx 14.1, found in Olivierus martensii (Manchurian scorpion).